A 223-amino-acid polypeptide reads, in one-letter code: Deoxyribose-phosphate aldolase (223 aa).

Catalysis depends on aspartate 91, which acts as the Proton donor/acceptor. The active-site Schiff-base intermediate with acetaldehyde is lysine 153. Catalysis depends on lysine 182, which acts as the Proton donor/acceptor.

Belongs to the DeoC/FbaB aldolase family. DeoC type 1 subfamily.

It localises to the cytoplasm. The enzyme catalyses 2-deoxy-D-ribose 5-phosphate = D-glyceraldehyde 3-phosphate + acetaldehyde. It functions in the pathway carbohydrate degradation; 2-deoxy-D-ribose 1-phosphate degradation; D-glyceraldehyde 3-phosphate and acetaldehyde from 2-deoxy-alpha-D-ribose 1-phosphate: step 2/2. In terms of biological role, catalyzes a reversible aldol reaction between acetaldehyde and D-glyceraldehyde 3-phosphate to generate 2-deoxy-D-ribose 5-phosphate. In Streptococcus agalactiae serotype V (strain ATCC BAA-611 / 2603 V/R), this protein is Deoxyribose-phosphate aldolase.